The chain runs to 56 residues: Small ribosomal subunit protein uS14 (56 aa).

Positions 21, 24, 39, and 42 each coordinate Zn(2+).

It belongs to the universal ribosomal protein uS14 family. Zinc-binding uS14 subfamily. Part of the 30S ribosomal subunit. Zn(2+) serves as cofactor.

Binds 16S rRNA, required for the assembly of 30S particles. The chain is Small ribosomal subunit protein uS14 from Pyrococcus furiosus (strain ATCC 43587 / DSM 3638 / JCM 8422 / Vc1).